The chain runs to 227 residues: uncharacterized protein (227 aa).

A helical transmembrane segment spans residues 7-26 (IITLTILIFISGLLTAFLLL).

The protein resides in the membrane. This is an uncharacterized protein from Haemophilus influenzae (strain ATCC 51907 / DSM 11121 / KW20 / Rd).